A 385-amino-acid chain; its full sequence is Leucine aminopeptidase 1 (385 aa).

The signal sequence occupies residues 1–19 (MKFPNLLSLGVAASTTVLA). Residues 20 to 87 (AVPNQKPIGD…FPRTFAQTTV (68 aa)) constitute a propeptide that is removed on maturation. An N-linked (GlcNAc...) asparagine glycan is attached at N177. The Zn(2+) site is built by H185, D204, E243, and D270. C319 and C323 are disulfide-bonded. Residue H352 coordinates Zn(2+).

This sequence belongs to the peptidase M28 family. M28E subfamily. In terms of assembly, monomer. Zn(2+) is required as a cofactor.

It localises to the secreted. In terms of biological role, extracellular aminopeptidase that allows assimilation of proteinaceous substrates. This chain is Leucine aminopeptidase 1 (LAP1), found in Ajellomyces capsulatus (strain H88) (Darling's disease fungus).